A 209-amino-acid chain; its full sequence is Large ribosomal subunit protein uL3 (209 aa).

The tract at residues 133 to 152 (THGNSLSHRVPGSIGQNQTP) is disordered. An N5-methylglutamine modification is found at Gln150.

The protein belongs to the universal ribosomal protein uL3 family. As to quaternary structure, part of the 50S ribosomal subunit. Forms a cluster with proteins L14 and L19. Methylated by PrmB.

One of the primary rRNA binding proteins, it binds directly near the 3'-end of the 23S rRNA, where it nucleates assembly of the 50S subunit. This is Large ribosomal subunit protein uL3 from Shigella sonnei (strain Ss046).